A 203-amino-acid chain; its full sequence is Probable GTP-binding protein EngB (203 aa).

Residues 1–190 form the EngB-type G domain; sequence MPEIVLVGRS…LEALQERVRK (190 aa). Residues 8–15, 35–39, 53–56, 132–135, and 169–171 each bind GTP; these read GRSNVGKS, GVTRK, DMPG, NKID, and ISA. 2 residues coordinate Mg(2+): serine 15 and threonine 37.

Belongs to the TRAFAC class TrmE-Era-EngA-EngB-Septin-like GTPase superfamily. EngB GTPase family. The cofactor is Mg(2+).

Necessary for normal cell division and for the maintenance of normal septation. The chain is Probable GTP-binding protein EngB from Methanopyrus kandleri (strain AV19 / DSM 6324 / JCM 9639 / NBRC 100938).